The sequence spans 841 residues: DNA mismatch repair protein MutS (841 aa).

596–603 (GPNMSGKS) is a binding site for ATP.

This sequence belongs to the DNA mismatch repair MutS family.

In terms of biological role, this protein is involved in the repair of mismatches in DNA. It is possible that it carries out the mismatch recognition step. This protein has a weak ATPase activity. This is DNA mismatch repair protein MutS from Acholeplasma laidlawii (strain PG-8A).